The primary structure comprises 635 residues: Threonine--tRNA ligase (635 aa).

Positions 1-61 (MINISFPDGS…DNDCRLRILT (61 aa)) constitute a TGS domain. The tract at residues 242–533 (DHRKLGKELD…LIEEYAGRFP (292 aa)) is catalytic. Zn(2+) contacts are provided by Cys333, His384, and His510.

Belongs to the class-II aminoacyl-tRNA synthetase family. As to quaternary structure, homodimer. Zn(2+) serves as cofactor.

The protein localises to the cytoplasm. It catalyses the reaction tRNA(Thr) + L-threonine + ATP = L-threonyl-tRNA(Thr) + AMP + diphosphate + H(+). Its function is as follows. Catalyzes the attachment of threonine to tRNA(Thr) in a two-step reaction: L-threonine is first activated by ATP to form Thr-AMP and then transferred to the acceptor end of tRNA(Thr). Also edits incorrectly charged L-seryl-tRNA(Thr). The sequence is that of Threonine--tRNA ligase from Rickettsia bellii (strain RML369-C).